A 251-amino-acid polypeptide reads, in one-letter code: Zwei Ig domain protein zig-3 (251 aa).

The N-terminal stretch at 1 to 19 (MLLICISVLAAISAHPLSS) is a signal peptide. Ig-like C2-type domains lie at 42-144 (PSLK…AKIS) and 160-244 (PVIT…TFLY). 2 disulfides stabilise this stretch: C65-C128 and C181-C228.

Expressed in PVT, AIM and ASI neurons, in vulva and weakly in body wall muscles.

It is found in the secreted. Required for maintaining axon position of PVQ and PVP neurons postembryonically in the ventral nerve cord (VNC) by preventing axons drifting into the opposite side of the VNC that could occur during body growth and movement. This chain is Zwei Ig domain protein zig-3, found in Caenorhabditis elegans.